A 150-amino-acid polypeptide reads, in one-letter code: Ribosomal RNA large subunit methyltransferase H (150 aa).

S-adenosyl-L-methionine contacts are provided by residues Ala-100 and 118-123 (LSEMTF).

Belongs to the RNA methyltransferase RlmH family. As to quaternary structure, homodimer.

The protein localises to the cytoplasm. The catalysed reaction is pseudouridine(1915) in 23S rRNA + S-adenosyl-L-methionine = N(3)-methylpseudouridine(1915) in 23S rRNA + S-adenosyl-L-homocysteine + H(+). Specifically methylates the pseudouridine at position 1915 (m3Psi1915) in 23S rRNA. The protein is Ribosomal RNA large subunit methyltransferase H of Helicobacter pylori (strain P12).